The sequence spans 23 residues: Basic phospholipase A2 intermexin (23 aa).

The protein belongs to the phospholipase A2 family. Group II subfamily. Ca(2+) serves as cofactor. Post-translationally, contains 7 disulfide bonds. In terms of tissue distribution, expressed by the venom gland.

The protein resides in the secreted. The catalysed reaction is a 1,2-diacyl-sn-glycero-3-phosphocholine + H2O = a 1-acyl-sn-glycero-3-phosphocholine + a fatty acid + H(+). Functionally, snake venom phospholipase A2 (PLA2) that shows presynaptic neurotoxicity and low myotoxicity. PLA2 catalyzes the calcium-dependent hydrolysis of the 2-acyl groups in 3-sn-phosphoglycerides. This is Basic phospholipase A2 intermexin from Gloydius intermedius (Central Asian pit viper).